Consider the following 203-residue polypeptide: Small ribosomal subunit protein uS2 (203 aa).

The protein belongs to the universal ribosomal protein uS2 family.

The protein is Small ribosomal subunit protein uS2 of Methanoregula boonei (strain DSM 21154 / JCM 14090 / 6A8).